The following is a 249-amino-acid chain: Putative S-adenosyl-L-methionine-dependent methyltransferase Mkms_0592 (249 aa).

Residues D111 and 141–142 (DL) each bind S-adenosyl-L-methionine.

This sequence belongs to the UPF0677 family.

Exhibits S-adenosyl-L-methionine-dependent methyltransferase activity. The sequence is that of Putative S-adenosyl-L-methionine-dependent methyltransferase Mkms_0592 from Mycobacterium sp. (strain KMS).